Here is a 381-residue protein sequence, read N- to C-terminus: Fatty acid elongase 6 (381 aa).

7 helical membrane passes run 10–30 (IAAA…LVYS), 69–89 (LPYL…SLIV), 107–127 (GLVH…GLMI), 153–173 (LIWL…IMLL), 182–202 (FLHV…LLVA), 216–236 (GVHV…SGIV), and 280–300 (LLQI…NFLV). A HxxHH motif motif is present at residues 184–188 (HVYHH). The active-site Nucleophile is the His187. Residues 362-381 (RKNGNGNGQKASLQAMAGSR) are disordered.

It belongs to the ELO family.

The protein localises to the membrane. The protein operates within lipid metabolism; polyunsaturated fatty acid biosynthesis. In terms of biological role, involved in the synthesis of fatty acids. Elongates C18 polyunsaturated fatty acids (PUFAs) with a preference for Delta6 PUFAs. The polypeptide is Fatty acid elongase 6 (Leishmania major).